A 416-amino-acid chain; its full sequence is Serine hydroxymethyltransferase (416 aa).

Residues Leu121 and Gly125–Leu127 contribute to the (6S)-5,6,7,8-tetrahydrofolate site. At Lys230 the chain carries N6-(pyridoxal phosphate)lysine. Ser355 to Phe357 is a (6S)-5,6,7,8-tetrahydrofolate binding site.

Belongs to the SHMT family. As to quaternary structure, homodimer. Pyridoxal 5'-phosphate is required as a cofactor.

Its subcellular location is the cytoplasm. It catalyses the reaction (6R)-5,10-methylene-5,6,7,8-tetrahydrofolate + glycine + H2O = (6S)-5,6,7,8-tetrahydrofolate + L-serine. It participates in one-carbon metabolism; tetrahydrofolate interconversion. The protein operates within amino-acid biosynthesis; glycine biosynthesis; glycine from L-serine: step 1/1. Its function is as follows. Catalyzes the reversible interconversion of serine and glycine with tetrahydrofolate (THF) serving as the one-carbon carrier. This reaction serves as the major source of one-carbon groups required for the biosynthesis of purines, thymidylate, methionine, and other important biomolecules. Also exhibits THF-independent aldolase activity toward beta-hydroxyamino acids, producing glycine and aldehydes, via a retro-aldol mechanism. The chain is Serine hydroxymethyltransferase from Streptococcus thermophilus (strain ATCC BAA-250 / LMG 18311).